The primary structure comprises 456 residues: Antizyme inhibitor 2 (456 aa).

Catalysis depends on C357, which acts as the Proton donor; shared with dimeric partner.

It belongs to the Orn/Lys/Arg decarboxylase class-II family. ODC antizyme inhibitor subfamily. Monomer. Interacts with OAZ1; this interaction disrupts the interaction between the antizyme and ODC1. Does not form a heterodimer with ODC1.

The protein resides in the nucleus. The protein localises to the cytoplasm. It is found in the perinuclear region. Its subcellular location is the membrane. It localises to the cytoplasmic vesicle. The protein resides in the endoplasmic reticulum-Golgi intermediate compartment. The protein localises to the golgi apparatus. It is found in the cis-Golgi network. Its subcellular location is the trans-Golgi network. It localises to the cytoplasmic granule. The protein resides in the cell projection. The protein localises to the axon. It is found in the dendrite. Its subcellular location is the perikaryon. In terms of biological role, antizyme inhibitor (AZI) protein that positively regulates ornithine decarboxylase (ODC) activity and polyamine uptake. AZI is an enzymatically inactive ODC homolog that counteracts the negative effect of ODC antizyme (AZ) on ODC activity by competing with ODC for antizyme-binding. Inhibits antizyme-dependent ODC degradation and releases ODC monomers from their inactive complex with antizymes, leading to formation of the catalytically active ODC homodimer and restoring polyamine production. Participates in the morphological integrity of the trans-Golgi network (TGN) and functions as a regulator of intracellular secretory vesicle trafficking. This is Antizyme inhibitor 2 (azin2) from Xenopus laevis (African clawed frog).